Here is a 444-residue protein sequence, read N- to C-terminus: Trigger factor (444 aa).

One can recognise a PPIase FKBP-type domain in the interval 166–251; the sequence is GDQVVIDFKG…VKAVKAPKAA (86 aa).

The protein belongs to the FKBP-type PPIase family. Tig subfamily.

It localises to the cytoplasm. The enzyme catalyses [protein]-peptidylproline (omega=180) = [protein]-peptidylproline (omega=0). Functionally, involved in protein export. Acts as a chaperone by maintaining the newly synthesized protein in an open conformation. Functions as a peptidyl-prolyl cis-trans isomerase. The chain is Trigger factor from Cereibacter sphaeroides (strain ATCC 17029 / ATH 2.4.9) (Rhodobacter sphaeroides).